Here is a 21-residue protein sequence, read N- to C-terminus: Hemocyanin subunit 1 (21 aa).

This sequence belongs to the tyrosinase family. Hemocyanin subfamily. As to expression, hemolymph.

The protein resides in the secreted. It is found in the extracellular space. Its function is as follows. Hemocyanins are copper-containing oxygen carriers occurring freely dissolved in the hemolymph of many mollusks and arthropods. The polypeptide is Hemocyanin subunit 1 (Maja squinado (Mediterranean spider crab)).